The primary structure comprises 282 residues: ATP synthase gamma chain (282 aa).

The protein belongs to the ATPase gamma chain family. As to quaternary structure, F-type ATPases have 2 components, CF(1) - the catalytic core - and CF(0) - the membrane proton channel. CF(1) has five subunits: alpha(3), beta(3), gamma(1), delta(1), epsilon(1). CF(0) has three main subunits: a, b and c.

The protein localises to the cell inner membrane. Functionally, produces ATP from ADP in the presence of a proton gradient across the membrane. The gamma chain is believed to be important in regulating ATPase activity and the flow of protons through the CF(0) complex. This Fusobacterium nucleatum subsp. nucleatum (strain ATCC 25586 / DSM 15643 / BCRC 10681 / CIP 101130 / JCM 8532 / KCTC 2640 / LMG 13131 / VPI 4355) protein is ATP synthase gamma chain.